The sequence spans 741 residues: Catalase-peroxidase (741 aa).

A signal peptide spans Met-1–Ala-23. A cross-link (tryptophyl-tyrosyl-methioninium (Trp-Tyr) (with M-249)) is located at residues Trp-102–Tyr-223. Catalysis depends on His-103, which acts as the Proton acceptor. The segment at residues Tyr-223 to Met-249 is a cross-link (tryptophyl-tyrosyl-methioninium (Tyr-Met) (with W-102)). His-264 contributes to the heme b binding site.

It belongs to the peroxidase family. Peroxidase/catalase subfamily. Homodimer or homotetramer. Requires heme b as cofactor. Formation of the three residue Trp-Tyr-Met cross-link is important for the catalase, but not the peroxidase activity of the enzyme.

The catalysed reaction is H2O2 + AH2 = A + 2 H2O. The enzyme catalyses 2 H2O2 = O2 + 2 H2O. In terms of biological role, bifunctional enzyme with both catalase and broad-spectrum peroxidase activity. The protein is Catalase-peroxidase of Francisella tularensis subsp. holarctica (strain FTNF002-00 / FTA).